The sequence spans 423 residues: D-tagatose-1,6-bisphosphate aldolase subunit GatZ (423 aa).

The protein belongs to the GatZ/KbaZ family. GatZ subfamily. As to quaternary structure, forms a complex with GatY.

Its pathway is carbohydrate metabolism; D-tagatose 6-phosphate degradation; D-glyceraldehyde 3-phosphate and glycerone phosphate from D-tagatose 6-phosphate: step 2/2. Its function is as follows. Component of the tagatose-1,6-bisphosphate aldolase GatYZ that is required for full activity and stability of the Y subunit. Could have a chaperone-like function for the proper and stable folding of GatY. When expressed alone, GatZ does not show any aldolase activity. Is involved in the catabolism of galactitol. This Salmonella newport (strain SL254) protein is D-tagatose-1,6-bisphosphate aldolase subunit GatZ.